The sequence spans 312 residues: MISAFYAFLDYLKNIKTASPHTLRNYCIDLNSFKSFLEKQGELSPSSPICLLTKERKETELPFSLFTKDSVRLYVLELMQENKAKRTIKRRLSAIKSFSQYCIKNRIIFEDPTETIHGPRLPKELPSPITYEQVEILMATPDLSKYTGFRDRCLLELFYSSGLRISEIVAINHWDIDFNSNLIRIRGKGKKERLVPMTPHAAQWLQQYLHHPERAHVEQDPQAFFLNRFGKRLTTRSIDRKFQKYLRQSGLSGSITPHTIRHTIATHWLENGMDLKTIQALLGHSSLETTTIYTHVSMKLKKQTHEESHPHS.

The 103-residue stretch at 1–103 (MISAFYAFLD…AIKSFSQYCI (103 aa)) folds into the Core-binding (CB) domain. Positions 124-306 (ELPSPITYEQ…SMKLKKQTHE (183 aa)) constitute a Tyr recombinase domain. Residues Arg164, Lys188, His258, Arg261, and His284 contribute to the active site. Tyr293 acts as the O-(3'-phospho-DNA)-tyrosine intermediate in catalysis.

Belongs to the 'phage' integrase family. XerC subfamily. Forms a cyclic heterotetrameric complex composed of two molecules of XerC and two molecules of XerD.

The protein localises to the cytoplasm. Functionally, site-specific tyrosine recombinase, which acts by catalyzing the cutting and rejoining of the recombining DNA molecules. The XerC-XerD complex is essential to convert dimers of the bacterial chromosome into monomers to permit their segregation at cell division. It also contributes to the segregational stability of plasmids. The polypeptide is Tyrosine recombinase XerC (Chlamydia caviae (strain ATCC VR-813 / DSM 19441 / 03DC25 / GPIC) (Chlamydophila caviae)).